The following is a 772-amino-acid chain: Phosphoribosylformylglycinamidine synthase subunit PurL (772 aa).

Residue histidine 62 is part of the active site. Positions 65 and 109 each coordinate ATP. Glutamate 111 provides a ligand contact to Mg(2+). Residues 112–115 and arginine 134 each bind substrate; that span reads SHNH. The Proton acceptor role is filled by histidine 113. Aspartate 135 is a Mg(2+) binding site. Position 259 (glutamine 259) interacts with substrate. Aspartate 287 is a Mg(2+) binding site. 331 to 333 lines the substrate pocket; that stretch reads ESQ. Residues aspartate 519 and glycine 556 each contribute to the ATP site. Residue asparagine 557 coordinates Mg(2+). Serine 559 is a substrate binding site.

The protein belongs to the FGAMS family. In terms of assembly, monomer. Part of the FGAM synthase complex composed of 1 PurL, 1 PurQ and 2 PurS subunits.

It localises to the cytoplasm. It catalyses the reaction N(2)-formyl-N(1)-(5-phospho-beta-D-ribosyl)glycinamide + L-glutamine + ATP + H2O = 2-formamido-N(1)-(5-O-phospho-beta-D-ribosyl)acetamidine + L-glutamate + ADP + phosphate + H(+). It functions in the pathway purine metabolism; IMP biosynthesis via de novo pathway; 5-amino-1-(5-phospho-D-ribosyl)imidazole from N(2)-formyl-N(1)-(5-phospho-D-ribosyl)glycinamide: step 1/2. Functionally, part of the phosphoribosylformylglycinamidine synthase complex involved in the purines biosynthetic pathway. Catalyzes the ATP-dependent conversion of formylglycinamide ribonucleotide (FGAR) and glutamine to yield formylglycinamidine ribonucleotide (FGAM) and glutamate. The FGAM synthase complex is composed of three subunits. PurQ produces an ammonia molecule by converting glutamine to glutamate. PurL transfers the ammonia molecule to FGAR to form FGAM in an ATP-dependent manner. PurS interacts with PurQ and PurL and is thought to assist in the transfer of the ammonia molecule from PurQ to PurL. This Leifsonia xyli subsp. xyli (strain CTCB07) protein is Phosphoribosylformylglycinamidine synthase subunit PurL.